The following is a 116-amino-acid chain: Integration host factor subunit alpha (116 aa).

2 disordered regions span residues 58 to 80 and 94 to 116; these read FGNF…GETI and QKLK…EAAE. Residues 94 to 105 are compositionally biased toward polar residues; it reads QKLKSTVEQSGN.

It belongs to the bacterial histone-like protein family. As to quaternary structure, heterodimer of an alpha and a beta chain.

Functionally, this protein is one of the two subunits of integration host factor, a specific DNA-binding protein that functions in genetic recombination as well as in transcriptional and translational control. This chain is Integration host factor subunit alpha, found in Bordetella avium (strain 197N).